Consider the following 397-residue polypeptide: Tryptophan synthase beta chain (397 aa).

At Lys91 the chain carries N6-(pyridoxal phosphate)lysine.

Belongs to the TrpB family. As to quaternary structure, tetramer of two alpha and two beta chains. The cofactor is pyridoxal 5'-phosphate.

The catalysed reaction is (1S,2R)-1-C-(indol-3-yl)glycerol 3-phosphate + L-serine = D-glyceraldehyde 3-phosphate + L-tryptophan + H2O. It participates in amino-acid biosynthesis; L-tryptophan biosynthesis; L-tryptophan from chorismate: step 5/5. Functionally, the beta subunit is responsible for the synthesis of L-tryptophan from indole and L-serine. This chain is Tryptophan synthase beta chain, found in Bacillus cereus (strain AH187).